The primary structure comprises 158 residues: Small ribosomal subunit protein uS9 (158 aa).

This sequence belongs to the universal ribosomal protein uS9 family.

The sequence is that of Small ribosomal subunit protein uS9 from Brucella melitensis biotype 1 (strain ATCC 23456 / CCUG 17765 / NCTC 10094 / 16M).